Consider the following 298-residue polypeptide: tRNA dimethylallyltransferase (298 aa).

An ATP-binding site is contributed by 16-23 (GPTASGKS). 18 to 23 (TASGKS) serves as a coordination point for substrate. 2 interaction with substrate tRNA regions span residues 41–44 (DSMQ) and 165–169 (QRIVR).

Belongs to the IPP transferase family. Monomer. Mg(2+) is required as a cofactor.

It catalyses the reaction adenosine(37) in tRNA + dimethylallyl diphosphate = N(6)-dimethylallyladenosine(37) in tRNA + diphosphate. Catalyzes the transfer of a dimethylallyl group onto the adenine at position 37 in tRNAs that read codons beginning with uridine, leading to the formation of N6-(dimethylallyl)adenosine (i(6)A). This chain is tRNA dimethylallyltransferase, found in Rhizobium radiobacter (Agrobacterium tumefaciens).